Reading from the N-terminus, the 429-residue chain is Glutamate-1-semialdehyde 2,1-aminomutase 2 (429 aa).

K268 carries the post-translational modification N6-(pyridoxal phosphate)lysine.

The protein belongs to the class-III pyridoxal-phosphate-dependent aminotransferase family. HemL subfamily. In terms of assembly, homodimer. Pyridoxal 5'-phosphate is required as a cofactor.

It is found in the cytoplasm. It carries out the reaction (S)-4-amino-5-oxopentanoate = 5-aminolevulinate. Its pathway is porphyrin-containing compound metabolism; protoporphyrin-IX biosynthesis; 5-aminolevulinate from L-glutamyl-tRNA(Glu): step 2/2. This chain is Glutamate-1-semialdehyde 2,1-aminomutase 2, found in Listeria monocytogenes serotype 4a (strain HCC23).